We begin with the raw amino-acid sequence, 209 residues long: PF03932 family protein CutC (209 aa).

Its subcellular location is the cytoplasm. This is PF03932 family protein CutC from Streptococcus pyogenes serotype M6 (strain ATCC BAA-946 / MGAS10394).